Here is an 845-residue protein sequence, read N- to C-terminus: Taste receptor type 1 member 3 (845 aa).

A signal peptide spans 1 to 18; sequence MAGLMLLSLMALLGLGAG. Topologically, residues 19 to 568 are extracellular; the sequence is APLCLSRQLR…FLAWGQPAVL (550 aa). N-linked (GlcNAc...) asparagine glycans are attached at residues asparagine 128 and asparagine 262. A helical membrane pass occupies residues 569 to 589; sequence VLLILLALALGLVLVALGLFI. Topologically, residues 590 to 601 are cytoplasmic; the sequence is RHRDSPLVQASG. Residues 602–622 traverse the membrane as a helical segment; it reads GPRACFGLACLGLVCLSVLLF. Residues 623–637 are Extracellular-facing; it reads PGQPGPASCLAQQPL. Residues 638–658 form a helical membrane-spanning segment; that stretch reads LHLPLTGCLSTLFLQAAQIFV. The Cytoplasmic segment spans residues 659-680; it reads GSELPSSWADQLRRCLQGPWAW. The helical transmembrane segment at 681–701 threads the bilayer; it reads LLVLLALLAEAALCAWYLVAF. Topologically, residues 702-727 are extracellular; that stretch reads PPEVVTDWWVLPTQVLVHCRMRSWIS. A helical membrane pass occupies residues 728–748; it reads FGLLHAINAMLAFLCFLGTFL. The Cytoplasmic segment spans residues 749–760; sequence VQSRPGRYNGAR. A helical transmembrane segment spans residues 761 to 781; the sequence is GLTFAMLAYFITWISFVPLFA. The Extracellular portion of the chain corresponds to 782-789; the sequence is NVHVAYQP. A helical membrane pass occupies residues 790-810; that stretch reads TVQMAAILLCALGILATFHLP. At 811–845 the chain is on the cytoplasmic side; it reads KCYLLLQQLELNNPEFFLGDDARGQGSSGSGGKET.

The protein belongs to the G-protein coupled receptor 3 family. TAS1R subfamily. Forms homodimers or heterodimers with TAS1R1 and TAS1R2.

The protein resides in the cell membrane. Its function is as follows. Putative taste receptor. TAS1R1/TAS1R3 responds to the umami taste stimulus (the taste of monosodium glutamate). TAS1R2/TAS1R3 recognizes diverse natural and synthetic sweeteners. TAS1R3 is essential for the recognition and response to the disaccharide trehalose. Sequence differences within and between species can significantly influence the selectivity and specificity of taste responses. This chain is Taste receptor type 1 member 3 (TAS1R3), found in Canis lupus familiaris (Dog).